The primary structure comprises 251 residues: MAGHSKFKNIMHRKGRADAARSKLFSKLSREITVAAKSGVPDPNMNPRLRLAVNNAKAESLPKDVIDRAIKKSQMGDAADYSEIRYEGVAAGGVGIIVEVLTDNKNRAAANVRSYFTKMGGNMGATNSVAFNYDRVGQVSYPAKAASEDDMMEAAIEAGADDVVSDMDEEGEGHIVYTAFESLNEVAAALEAKFGPASNTKIAWRPKMQVPVTGDAVATLMKLLDALNDDDDVQAVYSNEEISDEDVAKLG.

Belongs to the TACO1 family.

The protein localises to the cytoplasm. The sequence is that of Probable transcriptional regulatory protein Caul_0780 from Caulobacter sp. (strain K31).